The following is a 652-amino-acid chain: MSSPINDYFIDYNPLFPIFATRIAKGLAIYRVSDHARLAVIPIRNINLVANYDWDTTTGKFLSIFFKDGTIRIHDIFKDGRLVSFLRIPSTKISKGIWDRIPLRYEPNNRDFACNIIDDLPKLIRFVKDSKRINIVPYTQPNSLWRGPDEDDLDSNEKLDVHVVFNEGNDKITVFFNGDYAVFLSVDNIENENSLKSIIKVQDGFYQCFYEDGTVQTLNLGPLLQSKSSVNLLNYIMVIKELIGYMLTHLEFINRELATPYLDFVKRLCDEAYGYGKLKSELEALFLLGEISCDLEDWLCNSVGEKNFKRWKYLGCEAYQKTVQILTLIFVPACERIIIYVEKLRAILQAFSIQNKLSYTSDLTAVEVLLKSSQKLLTMTLNSIIGLGRDETLFEKFFIWFNDRLHEALDEDYKLKFQFEDDLYFGYDLLSYFDRILSKKGTEPSSIIDVKLYRDLINSMSDMEKDIAQSNVNSHIQQHILVDLKTDVFAQKYPSSQINLLDAIKLPKHNYIVYLIQVTKHNSAQEPFSEENKKKLYIGTLKDENLGIISKESSVKIPALFKSYRLSSTRFVPNRVHSLLRDIGLSDSNYHSSHVTDYRGENYENEEDDGTIAIPAYIRENRENDDFIACTAKVSVDGRSASLVFPKEKQNV.

As to quaternary structure, the APC/C is composed of at least 13 subunits that stay tightly associated throughout the cell cycle: APC1, APC2, APC4, APC5, APC9, APC11, CDC16, CDC23, CDC26, CDC27, DOC1, MND2 and SWM1.

It is found in the cytoplasm. It localises to the nucleus. It participates in protein modification; protein ubiquitination. Component of the anaphase promoting complex/cyclosome (APC/C), a cell cycle-regulated E3 ubiquitin-protein ligase complex that controls progression through mitosis and the G1 phase of the cell cycle. The APC/C is thought to confer substrate specificity and, in the presence of ubiquitin-conjugating E2 enzymes, it catalyzes the formation of protein-ubiquitin conjugates that are subsequently degraded by the 26S proteasome. In early mitosis, the APC/C is activated by CDC20 and targets securin PDS1, the B-type cyclin CLB5, and other anaphase inhibitory proteins for proteolysis, thereby triggering the separation of sister chromatids at the metaphase-to-anaphase transition. In late mitosis and in G1, degradation of CLB5 allows activation of the APC/C by CDH1, which is needed to destroy CDC20 and the B-type cyclin CLB2 to allow exit from mitosis and creating the low CDK state necessary for cytokinesis and for reforming prereplicative complexes in G1 prior to another round of replication. The polypeptide is Anaphase-promoting complex subunit 4 (APC4) (Saccharomyces cerevisiae (strain ATCC 204508 / S288c) (Baker's yeast)).